A 397-amino-acid polypeptide reads, in one-letter code: Acetate kinase (397 aa).

Asn8 lines the Mg(2+) pocket. Lys15 is an ATP binding site. Arg89 lines the substrate pocket. Asp146 acts as the Proton donor/acceptor in catalysis. ATP contacts are provided by residues 206–210 (HLGNG), 281–283 (DLR), and 329–333 (GVGEN). Glu382 serves as a coordination point for Mg(2+).

This sequence belongs to the acetokinase family. As to quaternary structure, homodimer. Requires Mg(2+) as cofactor. The cofactor is Mn(2+).

It is found in the cytoplasm. The catalysed reaction is acetate + ATP = acetyl phosphate + ADP. Its pathway is metabolic intermediate biosynthesis; acetyl-CoA biosynthesis; acetyl-CoA from acetate: step 1/2. Its function is as follows. Catalyzes the formation of acetyl phosphate from acetate and ATP. Can also catalyze the reverse reaction. This is Acetate kinase from Bacillus anthracis.